Reading from the N-terminus, the 769-residue chain is Acetyl-coenzyme A carboxylase carboxyl transferase subunit alpha, chloroplastic (769 aa).

A chloroplast-targeting transit peptide spans 1–54 (MASISHSSLALGGASSASASDYLRSSSNGVNGVPLKTLGRAVFTTIRRKDLAVT). The CoA carboxyltransferase C-terminal domain maps to 132–385 (LENKYRQALK…KIAINENMNE (254 aa)). Coiled coils occupy residues 426–504 (EAVF…ASSE) and 631–744 (KQNQ…SDGS). The interval 718–769 (GLQEKQDELEKELAAARELAAEESDGSVKEDDDDDEDSSESGKSEMVNPSFA) is disordered. Residues 721–732 (EKQDELEKELAA) are compositionally biased toward basic and acidic residues. Positions 738 to 756 (AEESDGSVKEDDDDDEDSS) are enriched in acidic residues. At Ser741 the chain carries Phosphoserine.

The protein belongs to the AccA family. As to quaternary structure, acetyl-CoA carboxylase is a heterohexamer composed of biotin carboxyl carrier protein, biotin carboxylase and two subunits each of ACCase subunit alpha and ACCase plastid-coded subunit beta (accD). Accumulates in fatty acids synthesizing tissues such as embryos, expanding leaves, flower buds, flowers, and developing siliques.

It is found in the plastid. Its subcellular location is the chloroplast inner membrane. It catalyses the reaction N(6)-carboxybiotinyl-L-lysyl-[protein] + acetyl-CoA = N(6)-biotinyl-L-lysyl-[protein] + malonyl-CoA. The protein operates within lipid metabolism; malonyl-CoA biosynthesis; malonyl-CoA from acetyl-CoA: step 1/1. In terms of biological role, component of the acetyl coenzyme A carboxylase (ACC) complex. First, biotin carboxylase catalyzes the carboxylation of biotin on its carrier protein (BCCP) and then the CO(2) group is transferred by the carboxyltransferase to acetyl-CoA to form malonyl-CoA. This chain is Acetyl-coenzyme A carboxylase carboxyl transferase subunit alpha, chloroplastic (CAC3), found in Arabidopsis thaliana (Mouse-ear cress).